Here is a 466-residue protein sequence, read N- to C-terminus: Glutamate--tRNA ligase (466 aa).

The 'HIGH' region signature appears at 10-20 (PSPTGYLHVGG). The Zn(2+) site is built by cysteine 99, cysteine 101, cysteine 126, and aspartate 128. A 'KMSKS' region motif is present at residues 237–241 (RLSKR). Lysine 240 contacts ATP.

Belongs to the class-I aminoacyl-tRNA synthetase family. Glutamate--tRNA ligase type 1 subfamily. As to quaternary structure, monomer. Zn(2+) is required as a cofactor.

It is found in the cytoplasm. The enzyme catalyses tRNA(Glu) + L-glutamate + ATP = L-glutamyl-tRNA(Glu) + AMP + diphosphate. Its function is as follows. Catalyzes the attachment of glutamate to tRNA(Glu) in a two-step reaction: glutamate is first activated by ATP to form Glu-AMP and then transferred to the acceptor end of tRNA(Glu). The sequence is that of Glutamate--tRNA ligase from Geobacter sulfurreducens (strain ATCC 51573 / DSM 12127 / PCA).